A 242-amino-acid polypeptide reads, in one-letter code: Glucosamine-6-phosphate deaminase (242 aa).

D71 functions as the Proton acceptor; for enolization step in the catalytic mechanism. The For ring-opening step role is filled by N142. H144 functions as the Proton acceptor; for ring-opening step in the catalytic mechanism. The active-site For ring-opening step is the E149.

This sequence belongs to the glucosamine/galactosamine-6-phosphate isomerase family. NagB subfamily.

It carries out the reaction alpha-D-glucosamine 6-phosphate + H2O = beta-D-fructose 6-phosphate + NH4(+). Its pathway is amino-sugar metabolism; N-acetylneuraminate degradation; D-fructose 6-phosphate from N-acetylneuraminate: step 5/5. Catalyzes the reversible isomerization-deamination of glucosamine 6-phosphate (GlcN6P) to form fructose 6-phosphate (Fru6P) and ammonium ion. The polypeptide is Glucosamine-6-phosphate deaminase (Malacoplasma penetrans (strain HF-2) (Mycoplasma penetrans)).